The following is a 191-amino-acid chain: Thymidine kinase (191 aa).

ATP is bound by residues Gly15–Thr22 and Asp88–Gln91. Glu89 serves as the catalytic Proton acceptor. Zn(2+) contacts are provided by Cys145, Cys148, Cys183, and Cys186.

The protein belongs to the thymidine kinase family. As to quaternary structure, homotetramer.

The protein resides in the cytoplasm. It catalyses the reaction thymidine + ATP = dTMP + ADP + H(+). This is Thymidine kinase from Clostridium botulinum (strain Kyoto / Type A2).